The primary structure comprises 501 residues: Ribose import ATP-binding protein RbsA (501 aa).

ABC transporter domains lie at 8-245 (LKMV…VGRT) and 255-500 (VKKG…VGIN). ATP is bound at residue 40-47 (GENGAGKS).

It belongs to the ABC transporter superfamily. Ribose importer (TC 3.A.1.2.1) family. In terms of assembly, the complex is composed of an ATP-binding protein (RbsA), two transmembrane proteins (RbsC) and a solute-binding protein (RbsB).

It localises to the cell membrane. It carries out the reaction D-ribose(out) + ATP + H2O = D-ribose(in) + ADP + phosphate + H(+). Part of the ABC transporter complex RbsABC involved in ribose import. Responsible for energy coupling to the transport system. This is Ribose import ATP-binding protein RbsA from Clostridium perfringens (strain 13 / Type A).